The following is a 414-amino-acid chain: TnpB-like protein MJ1635 (414 aa).

Positions 329, 332, 346, and 349 each coordinate Zn(2+).

It in the N-terminal section; belongs to the transposase 2 family. In the C-terminal section; belongs to the transposase 35 family.

The protein is TnpB-like protein MJ1635 of Methanocaldococcus jannaschii (strain ATCC 43067 / DSM 2661 / JAL-1 / JCM 10045 / NBRC 100440) (Methanococcus jannaschii).